Here is a 100-residue protein sequence, read N- to C-terminus: Small ribosomal subunit protein uS14c (100 aa).

This sequence belongs to the universal ribosomal protein uS14 family. As to quaternary structure, part of the 30S ribosomal subunit.

It is found in the plastid. Its function is as follows. Binds 16S rRNA, required for the assembly of 30S particles. In Cuscuta reflexa (Southern Asian dodder), this protein is Small ribosomal subunit protein uS14c (rps14).